Here is a 127-residue protein sequence, read N- to C-terminus: Large ribosomal subunit protein uL22 (127 aa).

As to quaternary structure, part of the 50S ribosomal subunit.

This protein binds specifically to 23S rRNA; its binding is stimulated by other ribosomal proteins, e.g. L4, L17, and L20. It is important during the early stages of 50S assembly. It makes multiple contacts with different domains of the 23S rRNA in the assembled 50S subunit and ribosome. In terms of biological role, the globular domain of the protein is located near the polypeptide exit tunnel on the outside of the subunit, while an extended beta-hairpin is found that lines the wall of the exit tunnel in the center of the 70S ribosome. In Rhodopseudomonas palustris (strain ATCC BAA-98 / CGA009), this protein is Large ribosomal subunit protein uL22.